A 66-amino-acid polypeptide reads, in one-letter code: DNA-directed RNA polymerase subunit Rpo10 (66 aa).

The Zn(2+) site is built by cysteine 7, cysteine 10, cysteine 44, and cysteine 45.

Belongs to the archaeal Rpo10/eukaryotic RPB10 RNA polymerase subunit family. Part of the RNA polymerase complex. Zn(2+) is required as a cofactor.

Its subcellular location is the cytoplasm. The catalysed reaction is RNA(n) + a ribonucleoside 5'-triphosphate = RNA(n+1) + diphosphate. Functionally, DNA-dependent RNA polymerase (RNAP) catalyzes the transcription of DNA into RNA using the four ribonucleoside triphosphates as substrates. The sequence is that of DNA-directed RNA polymerase subunit Rpo10 from Hyperthermus butylicus (strain DSM 5456 / JCM 9403 / PLM1-5).